A 424-amino-acid polypeptide reads, in one-letter code: Endoglucanase (424 aa).

The first 19 residues, 1–19 (MHRCMPLVAASMAALMLAG), serve as a signal peptide directing secretion. Residue cysteine 20 is the site of N-palmitoyl cysteine attachment. Cysteine 20 carries the S-diacylglycerol cysteine lipid modification. Positions 20-43 (CGGGDGDTTLSTAAATDTTTLKTA) are excised as a propeptide. Glutamate 247 (proton donor) is an active-site residue. The active-site Nucleophile is the glutamate 359.

The protein belongs to the glycosyl hydrolase 5 (cellulase A) family.

The protein resides in the cell membrane. The catalysed reaction is Endohydrolysis of (1-&gt;4)-beta-D-glucosidic linkages in cellulose, lichenin and cereal beta-D-glucans.. This Ralstonia nicotianae (strain ATCC BAA-1114 / GMI1000) (Ralstonia solanacearum) protein is Endoglucanase (egl).